We begin with the raw amino-acid sequence, 348 residues long: Dihydroorotase (348 aa).

Residues His-17 and His-19 each contribute to the Zn(2+) site. Substrate is bound by residues 19–21 and Asn-45; that span reads HLR. Zn(2+) is bound by residues Lys-103, His-140, and His-178. Lys-103 is subject to N6-carboxylysine. Residue His-140 participates in substrate binding. Substrate is bound at residue Leu-223. Asp-251 provides a ligand contact to Zn(2+). Residue Asp-251 is part of the active site. 2 residues coordinate substrate: His-255 and Ala-267.

This sequence belongs to the metallo-dependent hydrolases superfamily. DHOase family. Class II DHOase subfamily. In terms of assembly, homodimer. The cofactor is Zn(2+).

The enzyme catalyses (S)-dihydroorotate + H2O = N-carbamoyl-L-aspartate + H(+). Its pathway is pyrimidine metabolism; UMP biosynthesis via de novo pathway; (S)-dihydroorotate from bicarbonate: step 3/3. Its function is as follows. Catalyzes the reversible cyclization of carbamoyl aspartate to dihydroorotate. This chain is Dihydroorotase, found in Shigella boydii serotype 18 (strain CDC 3083-94 / BS512).